The sequence spans 176 residues: Inorganic pyrophosphatase (176 aa).

Lys30, Arg44, and Tyr56 together coordinate substrate. Mg(2+) contacts are provided by Asp66, Asp71, and Asp103. Substrate is bound at residue Tyr142.

Belongs to the PPase family. Homohexamer. Mg(2+) serves as cofactor.

The protein resides in the cytoplasm. The enzyme catalyses diphosphate + H2O = 2 phosphate + H(+). Functionally, catalyzes the hydrolysis of inorganic pyrophosphate (PPi) forming two phosphate ions. The chain is Inorganic pyrophosphatase from Escherichia coli O6:H1 (strain CFT073 / ATCC 700928 / UPEC).